The primary structure comprises 331 residues: MKKVIFSGIQPSGQLTLGNYIGALKQFGQFQDEYECFYCIVDEHAITVPQDRLKLREQTRSLAALYLAVGLDPEKSTLFIQSEVAAHAQAAWILQCNVYIGELERMTQFKDKSAGKAGVSAGLLTYPPLMAADILLYQTDLVPVGEDQKQHIELTRDLAERFNKKHADIFTMPEVFIPKQGARVMSLQDPTKKMSKSDANLKNAIFLLDPPATIRKKIKSAVTDSSGIIEYNKEEKPGVSNLLTIYSVITGETIASIEEKYVGKGYGDFKTDLAELVVSELEPIQERYYAYLKSEELDTILDAGAEKAARVANKTLKKMENGVGLGRKRRK.

ATP contacts are provided by residues 10–12 (QPS) and 18–19 (GN). Residues 11–19 (PSGQLTLGN) carry the 'HIGH' region motif. D133 is a binding site for L-tryptophan. Residues 145-147 (GED), V184, and 193-197 (KMSKS) contribute to the ATP site. The short motif at 193 to 197 (KMSKS) is the 'KMSKS' region element.

The protein belongs to the class-I aminoacyl-tRNA synthetase family. As to quaternary structure, homodimer.

It localises to the cytoplasm. The catalysed reaction is tRNA(Trp) + L-tryptophan + ATP = L-tryptophyl-tRNA(Trp) + AMP + diphosphate + H(+). Functionally, catalyzes the attachment of tryptophan to tRNA(Trp). This Listeria monocytogenes serovar 1/2a (strain ATCC BAA-679 / EGD-e) protein is Tryptophan--tRNA ligase.